Reading from the N-terminus, the 917-residue chain is Auxin response factor 17 (917 aa).

The TF-B3 DNA-binding region spans 134–236 (FCKTLTASDT…QLLLGIRRAN (103 aa)). A disordered region spans residues 571 to 649 (SVPNALSPFS…RPTAVPVPDP (79 aa)). Low complexity-rich tracts occupy residues 576–594 (LSPF…MTLQ) and 604–620 (SYPD…NTST). One can recognise a PB1 domain in the interval 786-870 (ATFVKVYKSG…SCIKILSPQE (85 aa)).

This sequence belongs to the ARF family. Homodimers and heterodimers. In terms of tissue distribution, expressed in roots, culms, leaves and young panicles.

The protein localises to the nucleus. In terms of biological role, auxin response factors (ARFs) are transcriptional factors that bind specifically to the DNA sequence 5'-TGTCTC-3' found in the auxin-responsive promoter elements (AuxREs). This is Auxin response factor 17 (ARF17) from Oryza sativa subsp. japonica (Rice).